The primary structure comprises 441 residues: Serine--tRNA ligase (441 aa).

250–252 lines the L-serine pocket; that stretch reads TSE. ATP contacts are provided by residues 281–283 and V297; that span reads RRE. An L-serine-binding site is contributed by E304. An ATP-binding site is contributed by 368–371; sequence EIVS. T402 serves as a coordination point for L-serine.

The protein belongs to the class-II aminoacyl-tRNA synthetase family. Type-1 seryl-tRNA synthetase subfamily. Homodimer. The tRNA molecule binds across the dimer.

It is found in the cytoplasm. It carries out the reaction tRNA(Ser) + L-serine + ATP = L-seryl-tRNA(Ser) + AMP + diphosphate + H(+). The catalysed reaction is tRNA(Sec) + L-serine + ATP = L-seryl-tRNA(Sec) + AMP + diphosphate + H(+). It participates in aminoacyl-tRNA biosynthesis; selenocysteinyl-tRNA(Sec) biosynthesis; L-seryl-tRNA(Sec) from L-serine and tRNA(Sec): step 1/1. Functionally, catalyzes the attachment of serine to tRNA(Ser). Is also able to aminoacylate tRNA(Sec) with serine, to form the misacylated tRNA L-seryl-tRNA(Sec), which will be further converted into selenocysteinyl-tRNA(Sec). The polypeptide is Serine--tRNA ligase (Thermoplasma acidophilum (strain ATCC 25905 / DSM 1728 / JCM 9062 / NBRC 15155 / AMRC-C165)).